A 22-amino-acid chain; its full sequence is Heat shock 70-related protein 1, mitochondrial (22 aa).

The protein belongs to the heat shock protein 70 family.

Its subcellular location is the mitochondrion. This is Heat shock 70-related protein 1, mitochondrial from Leishmania tarentolae (Sauroleishmania tarentolae).